The primary structure comprises 379 residues: Chaperone protein DnaJ 2 (379 aa).

A J domain is found at 4 to 68 (DYYAVLGVRR…QKKQVYDLGG (65 aa)). Residues 130–212 (GTTKDIQVDT…CAGDGRVPSR (83 aa)) form a CR-type zinc finger. Zn(2+) contacts are provided by Cys-143, Cys-146, Cys-160, Cys-163, Cys-186, Cys-189, Cys-200, and Cys-203. CXXCXGXG motif repeat units lie at residues 143 to 150 (CNTCNGEG), 160 to 167 (CDMCRGRG), 186 to 193 (CPQCQGFA), and 200 to 207 (CPECAGDG). The segment at 351–379 (RGEERPTGQFQPGQQGLFSRLKDAFNGRS) is disordered. A compositionally biased stretch (polar residues) spans 358 to 367 (GQFQPGQQGL). The segment covering 370–379 (RLKDAFNGRS) has biased composition (basic and acidic residues).

It belongs to the DnaJ family. In terms of assembly, homodimer. The cofactor is Zn(2+).

The protein localises to the cytoplasm. Participates actively in the response to hyperosmotic and heat shock by preventing the aggregation of stress-denatured proteins and by disaggregating proteins, also in an autonomous, DnaK-independent fashion. Unfolded proteins bind initially to DnaJ; upon interaction with the DnaJ-bound protein, DnaK hydrolyzes its bound ATP, resulting in the formation of a stable complex. GrpE releases ADP from DnaK; ATP binding to DnaK triggers the release of the substrate protein, thus completing the reaction cycle. Several rounds of ATP-dependent interactions between DnaJ, DnaK and GrpE are required for fully efficient folding. Also involved, together with DnaK and GrpE, in the DNA replication of plasmids through activation of initiation proteins. The chain is Chaperone protein DnaJ 2 from Streptomyces albus G.